We begin with the raw amino-acid sequence, 341 residues long: GDP-mannose transporter GONST5 (341 aa).

8 consecutive transmembrane segments (helical) span residues 17–37, 44–64, 89–109, 141–161, 192–212, 233–253, 260–280, and 284–304; these read LSIL…KWIF, FPLS…YIVI, FVFC…PVSF, LVPI…FNVF, INTV…PAFL, IILF…FYVI, TFNV…WMIF, and ISPM…FYGY. Residues 33–152 enclose the EamA domain; it reads NKWIFQKLDF…PIVGGILLTS (120 aa).

It belongs to the TPT transporter family. TPT (TC 2.A.7.9) subfamily. Expressed in rosette leaves, flowers and siliques.

The protein localises to the golgi apparatus membrane. Functionally, GDP-mannose transporter that may be involved in the import of GDP-mannose from the cytoplasm into the Golgi lumen. The sequence is that of GDP-mannose transporter GONST5 (GONST5) from Arabidopsis thaliana (Mouse-ear cress).